A 355-amino-acid polypeptide reads, in one-letter code: S-adenosylmethionine:tRNA ribosyltransferase-isomerase (355 aa).

This sequence belongs to the QueA family. Monomer.

It is found in the cytoplasm. The catalysed reaction is 7-aminomethyl-7-carbaguanosine(34) in tRNA + S-adenosyl-L-methionine = epoxyqueuosine(34) in tRNA + adenine + L-methionine + 2 H(+). The protein operates within tRNA modification; tRNA-queuosine biosynthesis. Functionally, transfers and isomerizes the ribose moiety from AdoMet to the 7-aminomethyl group of 7-deazaguanine (preQ1-tRNA) to give epoxyqueuosine (oQ-tRNA). The sequence is that of S-adenosylmethionine:tRNA ribosyltransferase-isomerase from Aeromonas hydrophila subsp. hydrophila (strain ATCC 7966 / DSM 30187 / BCRC 13018 / CCUG 14551 / JCM 1027 / KCTC 2358 / NCIMB 9240 / NCTC 8049).